Consider the following 206-residue polypeptide: uncharacterized protein (206 aa).

A helical transmembrane segment spans residues 4-24 (LLVVIAVALFIAAIVVLVVAI).

Its subcellular location is the membrane. This is an uncharacterized protein from Mycobacterium tuberculosis (strain CDC 1551 / Oshkosh).